Here is a 415-residue protein sequence, read N- to C-terminus: DNA polymerase IV (415 aa).

The region spanning 15–196 (ILHVDMNCFF…LSVEAMHGIG (182 aa)) is the UmuC domain. The Mg(2+) site is built by Asp19 and Asp115. Glu116 is an active-site residue. Over residues 235–246 (KRAKGTDDREVD) the composition is skewed to basic and acidic residues. The interval 235–260 (KRAKGTDDREVDPSQMGQHKSVGNSM) is disordered. Residues 249–260 (QMGQHKSVGNSM) show a composition bias toward polar residues.

Belongs to the DNA polymerase type-Y family. As to quaternary structure, monomer. It depends on Mg(2+) as a cofactor.

It is found in the cytoplasm. The enzyme catalyses DNA(n) + a 2'-deoxyribonucleoside 5'-triphosphate = DNA(n+1) + diphosphate. In terms of biological role, poorly processive, error-prone DNA polymerase involved in untargeted mutagenesis. Copies undamaged DNA at stalled replication forks, which arise in vivo from mismatched or misaligned primer ends. These misaligned primers can be extended by PolIV. Exhibits no 3'-5' exonuclease (proofreading) activity. May be involved in translesional synthesis, in conjunction with the beta clamp from PolIII. This is DNA polymerase IV from Bacillus cereus (strain ATCC 14579 / DSM 31 / CCUG 7414 / JCM 2152 / NBRC 15305 / NCIMB 9373 / NCTC 2599 / NRRL B-3711).